A 156-amino-acid chain; its full sequence is 6,7-dimethyl-8-ribityllumazine synthase (156 aa).

5-amino-6-(D-ribitylamino)uracil is bound by residues Phe25, 59 to 61, and 83 to 85; these read AFE and AVI. A (2S)-2-hydroxy-3-oxobutyl phosphate-binding site is contributed by 88–89; that stretch reads AT. The Proton donor role is filled by His91. Residue Phe116 coordinates 5-amino-6-(D-ribitylamino)uracil. Arg130 is a (2S)-2-hydroxy-3-oxobutyl phosphate binding site.

The protein belongs to the DMRL synthase family.

The catalysed reaction is (2S)-2-hydroxy-3-oxobutyl phosphate + 5-amino-6-(D-ribitylamino)uracil = 6,7-dimethyl-8-(1-D-ribityl)lumazine + phosphate + 2 H2O + H(+). It functions in the pathway cofactor biosynthesis; riboflavin biosynthesis; riboflavin from 2-hydroxy-3-oxobutyl phosphate and 5-amino-6-(D-ribitylamino)uracil: step 1/2. Catalyzes the formation of 6,7-dimethyl-8-ribityllumazine by condensation of 5-amino-6-(D-ribitylamino)uracil with 3,4-dihydroxy-2-butanone 4-phosphate. This is the penultimate step in the biosynthesis of riboflavin. The sequence is that of 6,7-dimethyl-8-ribityllumazine synthase from Nitratidesulfovibrio vulgaris (strain DSM 19637 / Miyazaki F) (Desulfovibrio vulgaris).